We begin with the raw amino-acid sequence, 396 residues long: Pectinesterase (396 aa).

An N-terminal signal peptide occupies residues 1–26 (MQSTTLYLKTAAFLGGCSLFAATALA). T174 serves as a coordination point for substrate. D232 (proton donor) is an active-site residue. D259 (nucleophile) is an active-site residue. 2 residues coordinate substrate: R324 and W326.

Belongs to the pectinesterase family.

It is found in the secreted. It carries out the reaction [(1-&gt;4)-alpha-D-galacturonosyl methyl ester](n) + n H2O = [(1-&gt;4)-alpha-D-galacturonosyl](n) + n methanol + n H(+). The protein operates within glycan metabolism; pectin degradation; 2-dehydro-3-deoxy-D-gluconate from pectin: step 1/5. In terms of biological role, involved in maceration and soft-rotting of plant tissue. In Ralstonia solanacearum (Pseudomonas solanacearum), this protein is Pectinesterase (pme).